Here is a 144-residue protein sequence, read N- to C-terminus: C-type isolectin Sp-CL4 (144 aa).

A C-type lectin domain is found at 27–144 (DENRKVKYFE…CSEKLPFMCA (118 aa)). 2 disulfides stabilise this stretch: Cys48–Cys143 and Cys119–Cys135.

Belongs to the true venom lectin family. In terms of processing, glycosylated with a carbohydrate of 383 Da. Expressed by the venom gland.

It localises to the secreted. Functionally, the role of this hemagglutinin in the venom is unknown, because it is masked by the high venom hemolytic activity. Lectin with specificity to galactose. Induces hemagglutination. The protein is C-type isolectin Sp-CL4 of Scorpaena plumieri (Spotted scorpionfish).